We begin with the raw amino-acid sequence, 250 residues long: Nuclear transcription factor Y subunit C-4 (250 aa).

The tract at residues 219–250 is disordered; sequence GIAYGGQQGHPGYLWQDPQEQQEEPPAEQQSD. A compositionally biased stretch (acidic residues) spans 238–250; the sequence is EQQEEPPAEQQSD.

This sequence belongs to the NFYC/HAP5 subunit family. As to quaternary structure, heterotrimeric transcription factor composed of three components, NF-YA, NF-YB and NF-YC. NF-YB and NF-YC must interact and dimerize for NF-YA association and DNA binding. Interacts with NFYB2. Interacts with NFYB8, NFYB10 and HD5/NFYB11.

Its subcellular location is the nucleus. The protein resides in the cytoplasm. In terms of biological role, probable transcription factor involved in the regulation of flowering time under long day (LD) conditions. Functions as a repressor of flowering, independently of HD1 and GHD7. Controls flowering time by negatively regulating the expression of EHD1 and HD3A. Component of the NF-Y/HAP transcription factor complex. This chain is Nuclear transcription factor Y subunit C-4, found in Oryza sativa subsp. japonica (Rice).